A 363-amino-acid chain; its full sequence is Early boundary activity protein 1 (363 aa).

Positions 155-168 are enriched in basic and acidic residues; the sequence is MDQEPEHKQSHEQD. A disordered region spans residues 155-242; the sequence is MDQEPEHKQS…NAKRRCPGFE (88 aa). The span at 198–209 shows a compositional bias: acidic residues; sequence EDLGLDDDDEDY. The region spanning 255–354 is the BEN domain; sequence GPNGTEVSRI…TKCADENKML (100 aa).

The heterotrimeric Elba complex consists of Elba1, Elba2 and Elba3.

It is found in the nucleus. In terms of biological role, the heterotrimeric Elba complex is required for chromatin domain boundary function during early embryogenesis. It binds to a 8-bp sequence 5'-CCAATAAG-3' in the Fab-7 insulator or boundary element in the bithorax complex and contributes to its insulator or boundary activity. Elba1 may act as a transcriptional repressor and binds the palindromic sequence 5'-CCAATTGG-3' to mediate transcriptional repression. The polypeptide is Early boundary activity protein 1 (Drosophila melanogaster (Fruit fly)).